The primary structure comprises 462 residues: Adenylosuccinate lyase (462 aa).

Residues 21–22 (RY), 87–89 (KHD), and 114–115 (TS) each bind N(6)-(1,2-dicarboxyethyl)-AMP. H162 (proton donor/acceptor) is an active-site residue. N(6)-(1,2-dicarboxyethyl)-AMP is bound at residue Q236. The active-site Proton donor/acceptor is S287. Residues S288, 293-295 (KRN), and 332-336 (SAERC) contribute to the N(6)-(1,2-dicarboxyethyl)-AMP site.

This sequence belongs to the lyase 1 family. Adenylosuccinate lyase subfamily. In terms of assembly, homotetramer. Residues from neighboring subunits contribute catalytic and substrate-binding residues to each active site.

The enzyme catalyses N(6)-(1,2-dicarboxyethyl)-AMP = fumarate + AMP. The catalysed reaction is (2S)-2-[5-amino-1-(5-phospho-beta-D-ribosyl)imidazole-4-carboxamido]succinate = 5-amino-1-(5-phospho-beta-D-ribosyl)imidazole-4-carboxamide + fumarate. The protein operates within purine metabolism; AMP biosynthesis via de novo pathway; AMP from IMP: step 2/2. It participates in purine metabolism; IMP biosynthesis via de novo pathway; 5-amino-1-(5-phospho-D-ribosyl)imidazole-4-carboxamide from 5-amino-1-(5-phospho-D-ribosyl)imidazole-4-carboxylate: step 2/2. Functionally, catalyzes two reactions in de novo purine nucleotide biosynthesis. Catalyzes the breakdown of 5-aminoimidazole- (N-succinylocarboxamide) ribotide (SAICAR or 2-[5-amino-1-(5-phospho-beta-D-ribosyl)imidazole-4-carboxamido]succinate) to 5-aminoimidazole-4-carboxamide ribotide (AICAR or 5-amino-1-(5-phospho-beta-D-ribosyl)imidazole-4-carboxamide) and fumarate, and of adenylosuccinate (ADS or N(6)-(1,2-dicarboxyethyl)-AMP) to adenosine monophosphate (AMP) and fumarate. This Methanocaldococcus jannaschii (strain ATCC 43067 / DSM 2661 / JAL-1 / JCM 10045 / NBRC 100440) (Methanococcus jannaschii) protein is Adenylosuccinate lyase (purB).